The sequence spans 932 residues: Probable serine/threonine-protein kinase clkA (932 aa).

A compositionally biased stretch (basic residues) spans 1 to 10 (MDRFQTKRKT). Disordered stretches follow at residues 1–21 (MDRFQTKRKTYSYNGYSNNDY), 39–198 (YKNN…YGDT), and 212–562 (NDYD…TNTN). 2 stretches are compositionally biased toward low complexity: residues 11–21 (YSYNGYSNNDY) and 39–123 (YKNN…ENNY). The segment covering 124-143 (FQSENQSNKDQNSYFNSSYL) has biased composition (polar residues). Low complexity-rich tracts occupy residues 148–196 (DNYN…NSYG), 218–305 (NNNN…NGGN), 314–342 (VFNNNNNNNNNNNNNYNNYNSNNNYNNDY), and 351–562 (NIYS…TNTN). The Protein kinase domain maps to 590 to 920 (YKVLCTVGSG…ASDALSHPFL (331 aa)). ATP is bound by residues 596–604 (VGSGTFSTV) and K619. The active-site Proton acceptor is D719.

It belongs to the protein kinase superfamily. CMGC Ser/Thr protein kinase family.

The catalysed reaction is L-seryl-[protein] + ATP = O-phospho-L-seryl-[protein] + ADP + H(+). It carries out the reaction L-threonyl-[protein] + ATP = O-phospho-L-threonyl-[protein] + ADP + H(+). In Dictyostelium discoideum (Social amoeba), this protein is Probable serine/threonine-protein kinase clkA (clkA).